Reading from the N-terminus, the 117-residue chain is Large ribosomal subunit protein bL19 (117 aa).

The protein belongs to the bacterial ribosomal protein bL19 family.

This protein is located at the 30S-50S ribosomal subunit interface and may play a role in the structure and function of the aminoacyl-tRNA binding site. This Shewanella amazonensis (strain ATCC BAA-1098 / SB2B) protein is Large ribosomal subunit protein bL19.